Here is a 272-residue protein sequence, read N- to C-terminus: Rhamnulose-1-phosphate aldolase (272 aa).

The active site involves E117. Positions 141, 143, and 212 each coordinate Zn(2+).

This sequence belongs to the aldolase class II family. RhaD subfamily. Zn(2+) serves as cofactor.

The protein resides in the cytoplasm. The catalysed reaction is L-rhamnulose 1-phosphate = (S)-lactaldehyde + dihydroxyacetone phosphate. It functions in the pathway carbohydrate degradation; L-rhamnose degradation; glycerone phosphate from L-rhamnose: step 3/3. In terms of biological role, catalyzes the reversible cleavage of L-rhamnulose-1-phosphate to dihydroxyacetone phosphate (DHAP) and L-lactaldehyde. The protein is Rhamnulose-1-phosphate aldolase of Mannheimia succiniciproducens (strain KCTC 0769BP / MBEL55E).